We begin with the raw amino-acid sequence, 225 residues long: Ferric nitrobindin-like protein (225 aa).

Positions 78-84 (GVWRGTG) match the GXWXGXG motif.

It belongs to the nitrobindin family.

In Corynebacterium diphtheriae (strain ATCC 700971 / NCTC 13129 / Biotype gravis), this protein is Ferric nitrobindin-like protein.